Consider the following 192-residue polypeptide: Erythropoietin (192 aa).

The signal sequence occupies residues Met1 to Gly26. A disulfide bridge links Cys33 with Cys187. 3 N-linked (GlcNAc...) asparagine glycosylation sites follow: Asn50, Asn64, and Asn109.

This sequence belongs to the EPO/TPO family.

Its subcellular location is the secreted. Functionally, hormone involved in the regulation of erythrocyte proliferation and differentiation and the maintenance of a physiological level of circulating erythrocyte mass. Binds to EPOR leading to EPOR dimerization and JAK2 activation thereby activating specific downstream effectors, including STAT1 and STAT3. This Nannospalax galili (Northern Israeli blind subterranean mole rat) protein is Erythropoietin (EPO).